Consider the following 243-residue polypeptide: Calcium-binding protein LPS1-beta (243 aa).

7 EF-hand domains span residues 15 to 49 (EVID…DCPE), 47 to 82 (CPEE…YTKE), 85 to 120 (YSSD…ISTK), 121 to 156 (LVEG…KLPL), 157 to 189 (CFKK…NLPG), 191 to 226 (YSEE…LSKD), and 227 to 243 (DIKN…NGKI). Ca(2+) contacts are provided by Asp29, Asn31, Asp33, Thr35, Glu40, Asp60, Asn62, Asp64, Arg66, Glu71, Asp98, Asp100, Asn102, Arg104, Glu109, Asp134, Asp136, Asp138, His140, Glu145, Asp167, Asn169, Asp171, Ser173, Glu178, Asp204, Asn206, Asp208, Arg210, and Glu215.

In terms of tissue distribution, aboral ectoderm, a squamous epithelium covering the surface of the late stage embryo and larva.

Functionally, calcium-binding protein involved in larval development and metamorphosis. Likely to function as calcium buffers mediating the transport of calcium from the sea water to the blastocoel where calcium is required for skeleton formation. The chain is Calcium-binding protein LPS1-beta from Lytechinus pictus (Painted sea urchin).